A 208-amino-acid chain; its full sequence is DNA-binding protein HupB (208 aa).

The segment at 1 to 90 (MNKAELIDVL…PGAQFKAVIS (90 aa)) is bacterial histone-like domain. Lysine 3 bears the N6-acetyllysine mark. At lysine 3 the chain carries N6-acetyllysine; alternate; partial. Lysine 3 carries the N6-methyllysine; alternate; partial modification. N6-acetyllysine; partial is present on lysine 72. At lysine 86 the chain carries N6-methyllysine; partial. The tract at residues 92-208 (AQKLPADGPA…KKAPAKKGRR (117 aa)) is C-terminus, required for nucleoid localization. 2 positions are modified to N6-acetyllysine; alternate; partial: lysine 94 and lysine 103. N6-methyllysine; alternate; partial is present on residues lysine 94 and lysine 103. Residues 96 to 208 (PADGPAVKRG…KKAPAKKGRR (113 aa)) form a disordered region. The interval 101–205 (AVKRGVTAGP…AAAKKAPAKK (105 aa)) is degenerate repeats region. The span at 113-208 (KAAKKAPAKK…KKAPAKKGRR (96 aa)) shows a compositional bias: basic residues. N6-acetyllysine occurs at positions 116, 136, 149, and 168.

Belongs to the bacterial histone-like protein family. Long actinobacterial subfamily. May form oligomers. Interacts with RNase E (rne). In addition to the identifed modifications, is also methylated on one of Arg-53; Arg-54 or Arg-55.

Its subcellular location is the cytoplasm. The protein resides in the nucleoid. It localises to the secreted. The protein localises to the cell wall. The enzyme catalyses 4 Fe(2+) + O2 + 4 H(+) = 4 Fe(3+) + 2 H2O. With respect to regulation, trans-stilbene derivative 4,4'-[(E)-ethene-1,2 diylbis({5[(phenylcarbonyl)amino]benzene-2,1-diyl}sulfonylimino)] dibenzoic acid (SD1) inhibits DNA binding at 50 uM. SD1 does not inhibit growth in a range of 3-1600 uM. In terms of biological role, a nucleoid-associated protein (NAP) that plays a crucial role in local chromosome architecture. Helps organize newly replicated oriC proximal regions and contributes to the timing of replication initiation and coordinating replication with chromosome segregation. There are between 30,000-60,000 molecules in a log phase cell; the protein-DNA complex is dynamic during the cell cycle, with more complexes near the cell ends. Binds irregularly along the chromosome with higher binding near the origin of replication (oriC) and lowest binding near the chromosome terminus (ter). Binds DNA non-sequence specifically via both its N- and C-terminal domains with high affinity, has no preference for linear or supercoiled DNA. Binds four-way junction DNA. Represses T7 RNA polymerase in vitro. The C-terminal domain enhances DNA end-joining in vitro in the presence of T4 DNA ligase. RNase E and HupB jointly contribute to cellular adaptation to changing growth conditions and survival during antibiotic treatment. Functionally, has ferroxidase activity, converts Fe(2+) into Fe(3+). Binds Fe(3+) but not Fe(2+); prevents the generation of hydroxyl radicals by the Fenton reaction and thus protects DNA from damage. May function in iron storage. Plays a role in epigenetic resistance to antibiotics. Growth on levels of isoniazid (INH) near the minimal inhibitory concentration (MIC) kills most bacteria. The surviving cells grow as either large or small colony variants (SCV), evidence suggest SCVs are associated with persistent infections. Mutating this protein leads to specific loss of SCVs. Its function is as follows. May play a role in cell wall assembly. The sequence is that of DNA-binding protein HupB from Mycolicibacterium smegmatis (strain ATCC 700084 / mc(2)155) (Mycobacterium smegmatis).